The following is a 278-amino-acid chain: Neuronal membrane glycoprotein M6-a (278 aa).

Methionine 1 carries the post-translational modification N-acetylmethionine. Over 1-22 (MEENMEEGQTQKGCFECCIKCL) the chain is Cytoplasmic. Residues 23–43 (GGIPYASLIATILLYAGVALF) traverse the membrane as a helical segment. Residues 44-84 (CGCGHEALSGTVNILQTYFELARTAGDTLDVFTMIDIFKYV) are Extracellular-facing. Residues 85 to 105 (IYGIAAAFFVYGILLMVEGFF) form a helical membrane-spanning segment. Over 106–127 (TTGAIKDLYGDFKITTCGRCVS) the chain is Cytoplasmic. The helical transmembrane segment at 128–148 (AWFIMLTYLFMLAWLGVTAFT) threads the bilayer. Topologically, residues 149-213 (SLPVYMYFNV…STELNMTFHL (65 aa)) are extracellular. Asparagine 164 carries an N-linked (GlcNAc...) asparagine glycan. A disulfide bridge connects residues cysteine 174 and cysteine 192. N-linked (GlcNAc...) asparagine glycosylation is present at asparagine 208. Residues 214 to 234 (FIVALAGAGAAVIAMVHYLMV) traverse the membrane as a helical segment. At 235 to 278 (LSANWAYVKDACRMQKYEDIKSKEEQELHDIHSTRSKERLNAYT) the chain is on the cytoplasmic side. Serine 256 is subject to Phosphoserine. Position 278 is a phosphothreonine (threonine 278).

Belongs to the myelin proteolipid protein family. As to quaternary structure, interacts with OPRM1. Interacts with palmitoyltransferase ZDHHC17/HIP14; the interaction leads to palmitoylation of GPM6A. N-glycosylated. In terms of processing, palmitoylated by ZDHHC17/HIP14. Widely expressed in the CNS. Found especially in the granule cell layer of the cerebellum but not in the molecular layer or white matter. Expressed in the immature embryonic retina including the nerve fiber layer (NFL), inner plexiform layer (IPL), and outer plexiform layer (OPL). Weakly expressed in processes of Mueller glia cells.

It is found in the cell membrane. The protein resides in the cell projection. Its subcellular location is the axon. It localises to the growth cone. The protein localises to the dendritic spine. It is found in the filopodium. The protein resides in the neuron projection. Functionally, involved in neuronal differentiation, including differentiation and migration of neuronal stem cells. Plays a role in neuronal plasticity and is involved in neurite and filopodia outgrowth, filopodia motility and probably synapse formation. Gpm6a-induced filopodia formation involves mitogen-activated protein kinase (MAPK) and Src signaling pathways. Conflictingly, PubMed:22162747 reports that induced cellular protrusions are simple membrane-wrapped tubules without actin or tubulin-based cytoskeletons and with Gpm6a gliding along membrane edges indicative for a function in actin-independent membrane deformation. May be involved in neuronal NGF-dependent Ca(2+) influx. May be involved in regulation of endocytosis and intracellular trafficking of G-protein-coupled receptors (GPCRs); enhances internalization and recycling of mu-type opioid receptor. This Mus musculus (Mouse) protein is Neuronal membrane glycoprotein M6-a (Gpm6a).